Consider the following 837-residue polypeptide: Protein translocase subunit SecA (837 aa).

ATP-binding positions include Q85, 103-107, and D493; that span reads GEGKT. Residues C821, C823, C832, and H833 each contribute to the Zn(2+) site.

Belongs to the SecA family. In terms of assembly, monomer and homodimer. Part of the essential Sec protein translocation apparatus which comprises SecA, SecYEG and auxiliary proteins SecDF. Other proteins may also be involved. Requires Zn(2+) as cofactor.

Its subcellular location is the cell membrane. It localises to the cytoplasm. The catalysed reaction is ATP + H2O + cellular proteinSide 1 = ADP + phosphate + cellular proteinSide 2.. Functionally, part of the Sec protein translocase complex. Interacts with the SecYEG preprotein conducting channel. Has a central role in coupling the hydrolysis of ATP to the transfer of proteins into and across the cell membrane, serving as an ATP-driven molecular motor driving the stepwise translocation of polypeptide chains across the membrane. The protein is Protein translocase subunit SecA of Streptococcus pneumoniae serotype 19F (strain G54).